A 696-amino-acid chain; its full sequence is Potassium voltage-gated channel subfamily KQT member 4 (696 aa).

Residues 1–20 are disordered; it reads MAEAPPRRLGLGPPPGDAPR. The Cytoplasmic portion of the chain corresponds to 1–97; that stretch reads MAEAPPRRLG…VYNVLERPRG (97 aa). Position 94 (Arg-94) interacts with a 1,2-diacyl-sn-glycero-3-phospho-(1D-myo-inositol-4,5-bisphosphate). The chain crosses the membrane as a helical span at residues 98–119; sequence WAFVYHVFIFLLVFSCLVLSVL. The Extracellular portion of the chain corresponds to 120-130; that stretch reads STIQEHQELAN. The helical transmembrane segment at 131–153 threads the bilayer; it reads ECLLILEFVMIVVFGLEYIIRVW. Topologically, residues 154 to 169 are cytoplasmic; it reads SAGCCCRYRGWQGRFR. Residues 170 to 192 form a helical membrane-spanning segment; that stretch reads FARKPFCVIDFIVFVASVAVIAA. Lys-173 contacts a 1,2-diacyl-sn-glycero-3-phospho-(1D-myo-inositol-4,5-bisphosphate). Residues 193-203 lie on the Extracellular side of the membrane; it reads GTQGNIFATSA. The helical; Voltage-sensor transmembrane segment at 204 to 224 threads the bilayer; that stretch reads LRSMRFLQILRMVRMDRRGGT. A 1,2-diacyl-sn-glycero-3-phospho-(1D-myo-inositol-4,5-bisphosphate)-binding residues include Arg-220, Arg-221, Lys-226, and Ser-236. Residues 225–236 lie on the Cytoplasmic side of the membrane; the sequence is WKLLGSVVYAHS. The helical transmembrane segment at 237–259 threads the bilayer; that stretch reads KELITAWYIGFLVLIFASFLVYL. At 260–271 the chain is on the extracellular side; the sequence is AEKDANSDFSSY. Residues 272–293 constitute an intramembrane region (pore-forming); that stretch reads ADSLWWGTITLTTIGYGDKTPH. Position 294 (Thr-294) is a topological domain, extracellular. A helical membrane pass occupies residues 295–323; the sequence is WLGRVLAAGFALLGISFFALPAGILGSGF. The Cytoplasmic segment spans residues 324–696; it reads ALKVQEQHRQ…ISRSVSTNMD (373 aa). 2 residues coordinate a 1,2-diacyl-sn-glycero-3-phospho-(1D-myo-inositol-4,5-bisphosphate): His-331 and Lys-334. Residues 343–352 form an interaction with CALM region; sequence AANLIQAAWR. Residues 445–484 form a disordered region; it reads SSQKRTGPSKQHLAPPPIPTSPSSEQVGEASSPSKVQKSW. Polar residues predominate over residues 465-484; sequence SPSSEQVGEASSPSKVQKSW. Residues 536–550 are interaction with CALM; that stretch reads RSVRILKFLVAKRKF. Positions 547 to 651 are C-terminal assembly domain (tetramerization); it reads KRKFKETLRP…SRCLRSGTSA (105 aa). Positions 589-609 are disordered; sequence GRGPGDRKTREKGDKGPSDTE. Basic and acidic residues predominate over residues 592–606; the sequence is PGDRKTREKGDKGPS. Residues 610-645 are a coiled coil; it reads AVDEISMMGRVVKVEKQVQSIEHKLDLLLGFYSRCL.

It belongs to the potassium channel family. KQT (TC 1.A.1.15) subfamily. Kv7.4/KCNQ4 sub-subfamily. As to quaternary structure, homotetramer. Interacts (via C-terminus) with calmodulin; forms a heterooctameric structure (with 4:4 KCNQ1:CALM stoichiometry); the interaction is calcium-independent, constitutive, participates in the proper assembly of a functional channel. The interaction with calcium-free CALM controls channel trafficking whereas interaction with calcium-bound CALM regulates channel gating. May form a functional heteromultimeric channel with KCNQ3. Interacts with HSP90AB1; promotes cell surface expression of KCNQ4. In terms of tissue distribution, in the inner ear expressed in the outer sensory hair cells of the cochlea and in type I hair cells of the vestibular organs. Also expressed in the postsynaptic membrane of the calyx nerve endings innervating type I cells. In the brain expressed in neurons of many, but not all, nuclei of the central auditory pathway. Absent from most other brain regions.

It localises to the basal cell membrane. The catalysed reaction is K(+)(in) = K(+)(out). Its activity is regulated as follows. Two molecules of phosphatidylinositol-4,5-bisphosphate (PIP2-I and PIP2-II) are essential to activate KCNQ4 channel by inducing the coupling of the voltage-sensing domain (VSD) and the pore-forming domain (PD). Upon channel activation, PIP2-I and PIP2-II disrupt the VSD-calmodulin/CALM interaction, causing the release of CALM from the VSD which triggers the opening of the gate. Calcium suppresses KCNQ4 channel current through calcium-bound CALM C-terminus. Therefore CALM acts as calcium sensor that controls channel activity. Functionally, pore-forming subunit of the voltage-gated potassium (Kv) channel involved in the regulation of sensory cells excitability in the cochlea. KCNQ4/Kv7.4 channel is composed of 4 pore-forming subunits assembled as tetramers. Promotes the outflow of potassium ions in the repolarization phase of action potential which plays a role in regulating membrane potential of excitable cells. The channel conducts a slowly activating and deactivating current. Current often shows some inward rectification at positive potentials. Channel may be selectively permeable in vitro to other cations besides potassium, in decreasing order of affinity K(+) = Rb(+) &gt; Cs(+) &gt; Na(+). Important for normal physiological function of inner ear such as sensory perception of sound. The polypeptide is Potassium voltage-gated channel subfamily KQT member 4 (Mus musculus (Mouse)).